The following is a 316-amino-acid chain: Methionyl-tRNA formyltransferase (316 aa).

A (6S)-5,6,7,8-tetrahydrofolate-binding site is contributed by 113-116 (SLLP).

Belongs to the Fmt family.

The catalysed reaction is L-methionyl-tRNA(fMet) + (6R)-10-formyltetrahydrofolate = N-formyl-L-methionyl-tRNA(fMet) + (6S)-5,6,7,8-tetrahydrofolate + H(+). Functionally, attaches a formyl group to the free amino group of methionyl-tRNA(fMet). The formyl group appears to play a dual role in the initiator identity of N-formylmethionyl-tRNA by promoting its recognition by IF2 and preventing the misappropriation of this tRNA by the elongation apparatus. The polypeptide is Methionyl-tRNA formyltransferase (Sodalis glossinidius (strain morsitans)).